A 484-amino-acid chain; its full sequence is UDP-N-acetylmuramate--L-alanine ligase (484 aa).

126-132 (GTHGKTT) provides a ligand contact to ATP.

It belongs to the MurCDEF family.

It localises to the cytoplasm. It catalyses the reaction UDP-N-acetyl-alpha-D-muramate + L-alanine + ATP = UDP-N-acetyl-alpha-D-muramoyl-L-alanine + ADP + phosphate + H(+). It participates in cell wall biogenesis; peptidoglycan biosynthesis. Its function is as follows. Cell wall formation. In Aeromonas hydrophila subsp. hydrophila (strain ATCC 7966 / DSM 30187 / BCRC 13018 / CCUG 14551 / JCM 1027 / KCTC 2358 / NCIMB 9240 / NCTC 8049), this protein is UDP-N-acetylmuramate--L-alanine ligase.